The sequence spans 195 residues: Protein GrpE (195 aa).

Belongs to the GrpE family. In terms of assembly, homodimer.

Its subcellular location is the cytoplasm. Participates actively in the response to hyperosmotic and heat shock by preventing the aggregation of stress-denatured proteins, in association with DnaK and GrpE. It is the nucleotide exchange factor for DnaK and may function as a thermosensor. Unfolded proteins bind initially to DnaJ; upon interaction with the DnaJ-bound protein, DnaK hydrolyzes its bound ATP, resulting in the formation of a stable complex. GrpE releases ADP from DnaK; ATP binding to DnaK triggers the release of the substrate protein, thus completing the reaction cycle. Several rounds of ATP-dependent interactions between DnaJ, DnaK and GrpE are required for fully efficient folding. The polypeptide is Protein GrpE (Francisella tularensis subsp. novicida (strain U112)).